The following is a 210-amino-acid chain: Regulatory protein RecX (210 aa).

Residues 28-47 (SRRQEEGAASSLFDREAEEK) are disordered.

This sequence belongs to the RecX family.

Its subcellular location is the cytoplasm. Modulates RecA activity. The chain is Regulatory protein RecX from Corynebacterium efficiens (strain DSM 44549 / YS-314 / AJ 12310 / JCM 11189 / NBRC 100395).